The sequence spans 366 residues: Chorismate synthase (366 aa).

Positions 48 and 54 each coordinate NADP(+). FMN contacts are provided by residues 125 to 127 (RSS), 238 to 239 (NA), Gly-278, 293 to 297 (KPTSS), and Arg-319.

The protein belongs to the chorismate synthase family. Homotetramer. FMNH2 is required as a cofactor.

It catalyses the reaction 5-O-(1-carboxyvinyl)-3-phosphoshikimate = chorismate + phosphate. It functions in the pathway metabolic intermediate biosynthesis; chorismate biosynthesis; chorismate from D-erythrose 4-phosphate and phosphoenolpyruvate: step 7/7. Functionally, catalyzes the anti-1,4-elimination of the C-3 phosphate and the C-6 proR hydrogen from 5-enolpyruvylshikimate-3-phosphate (EPSP) to yield chorismate, which is the branch point compound that serves as the starting substrate for the three terminal pathways of aromatic amino acid biosynthesis. This reaction introduces a second double bond into the aromatic ring system. The polypeptide is Chorismate synthase (Paraburkholderia phytofirmans (strain DSM 17436 / LMG 22146 / PsJN) (Burkholderia phytofirmans)).